A 435-amino-acid chain; its full sequence is Probable exopolygalacturonase B (435 aa).

A signal peptide spans M1–S15. Residues N59, N184, and N224 are each glycosylated (N-linked (GlcNAc...) asparagine). PbH1 repeat units follow at residues S208–N239, V240–P261, N262–S283, I294–A315, and I326–Q347. The active-site Proton donor is D254. An intrachain disulfide couples C256 to C273. N-linked (GlcNAc...) asparagine glycosylation is found at N262 and N274. H277 is a catalytic residue. Residues N301, N328, N365, and N373 are each glycosylated (N-linked (GlcNAc...) asparagine). The stretch at V366–D388 is one PbH1 6 repeat. C391 and C397 are oxidised to a cystine. N406 carries an N-linked (GlcNAc...) asparagine glycan.

Belongs to the glycosyl hydrolase 28 family.

Its subcellular location is the secreted. The catalysed reaction is [(1-&gt;4)-alpha-D-galacturonosyl](n) + H2O = alpha-D-galacturonate + [(1-&gt;4)-alpha-D-galacturonosyl](n-1). Functionally, specific in hydrolyzing the terminal glycosidic bond of polygalacturonic acid and oligogalacturonates. This Aspergillus oryzae (strain ATCC 42149 / RIB 40) (Yellow koji mold) protein is Probable exopolygalacturonase B (pgxB).